A 377-amino-acid polypeptide reads, in one-letter code: Cobalt-precorrin-5B C(1)-methyltransferase (377 aa).

The interval 1–21 is disordered; that stretch reads MNPVRQPYDLAAPAPNGMRRG.

The protein belongs to the CbiD family.

The enzyme catalyses Co-precorrin-5B + S-adenosyl-L-methionine = Co-precorrin-6A + S-adenosyl-L-homocysteine. Its pathway is cofactor biosynthesis; adenosylcobalamin biosynthesis; cob(II)yrinate a,c-diamide from sirohydrochlorin (anaerobic route): step 6/10. Catalyzes the methylation of C-1 in cobalt-precorrin-5B to form cobalt-precorrin-6A. This chain is Cobalt-precorrin-5B C(1)-methyltransferase, found in Chromobacterium violaceum (strain ATCC 12472 / DSM 30191 / JCM 1249 / CCUG 213 / NBRC 12614 / NCIMB 9131 / NCTC 9757 / MK).